Consider the following 240-residue polypeptide: 1-(5-phosphoribosyl)-5-[(5-phosphoribosylamino)methylideneamino] imidazole-4-carboxamide isomerase (240 aa).

Catalysis depends on aspartate 8, which acts as the Proton acceptor. The active-site Proton donor is aspartate 129.

It belongs to the HisA/HisF family.

It localises to the cytoplasm. It carries out the reaction 1-(5-phospho-beta-D-ribosyl)-5-[(5-phospho-beta-D-ribosylamino)methylideneamino]imidazole-4-carboxamide = 5-[(5-phospho-1-deoxy-D-ribulos-1-ylimino)methylamino]-1-(5-phospho-beta-D-ribosyl)imidazole-4-carboxamide. The protein operates within amino-acid biosynthesis; L-histidine biosynthesis; L-histidine from 5-phospho-alpha-D-ribose 1-diphosphate: step 4/9. The chain is 1-(5-phosphoribosyl)-5-[(5-phosphoribosylamino)methylideneamino] imidazole-4-carboxamide isomerase from Clostridium beijerinckii (strain ATCC 51743 / NCIMB 8052) (Clostridium acetobutylicum).